A 1034-amino-acid chain; its full sequence is Potassium-transporting ATPase alpha chain 1 (1034 aa).

Residues methionine 1–proline 97 lie on the Cytoplasmic side of the membrane. A phosphotyrosine mark is found at tyrosine 7 and tyrosine 10. The tract at residues leucine 14–lysine 41 is disordered. Residues methionine 26–lysine 39 are compositionally biased toward basic residues. Phosphoserine is present on serine 27. Residues glutamate 98–alanine 118 traverse the membrane as a helical segment. Topologically, residues alanine 119–tyrosine 141 are lumenal. Residues leucine 142–phenylalanine 162 form a helical membrane-spanning segment. The Cytoplasmic portion of the chain corresponds to lysine 163 to isoleucine 298. Residues asparagine 225–proline 239 are compositionally biased toward polar residues. A disordered region spans residues asparagine 225–serine 245. A helical transmembrane segment spans residues glutamate 299–valine 318. At valine 319–alanine 330 the chain is on the lumenal side. A helical membrane pass occupies residues methionine 331 to alanine 348. The K(+) site is built by valine 339, alanine 340, valine 342, and glutamate 344. Residues threonine 349 to leucine 782 are Cytoplasmic-facing. Aspartate 386 functions as the 4-aspartylphosphate intermediate in the catalytic mechanism. Positions 386 and 388 each coordinate Mg(2+). Phosphoserine occurs at positions 462 and 600. Residues aspartate 727 and aspartate 731 each contribute to the Mg(2+) site. A helical membrane pass occupies residues lysine 783–isoleucine 802. Glutamate 796 is a binding site for K(+). Over tyrosine 803–leucine 812 the chain is Lumenal. Residues glycine 813–alanine 833 form a helical membrane-spanning segment. Glutamate 821 contacts K(+). At tyrosine 834–arginine 853 the chain is on the cytoplasmic side. Phosphoserine is present on serine 839. The chain crosses the membrane as a helical span at residues leucine 854–phenylalanine 876. Residues threonine 877–cysteine 928 are Lumenal-facing. The chain crosses the membrane as a helical span at residues tyrosine 929–lysine 948. Residues threonine 949–asparagine 962 are Cytoplasmic-facing. Position 953 is a phosphoserine; by PKA (serine 953). The chain crosses the membrane as a helical span at residues arginine 963–tyrosine 981. At cysteine 982–tyrosine 996 the chain is on the lumenal side. A helical membrane pass occupies residues glutamine 997–lysine 1017. Over leucine 1018–tyrosine 1034 the chain is Cytoplasmic.

It belongs to the cation transport ATPase (P-type) (TC 3.A.3) family. Type IIC subfamily. The gastric H(+)/K(+) ATPase pump is composed of the catalytic alpha subunit ATP4A and the regulatory beta subunit ATP4B. Interacts (via the P-domain) with ATP4B (via N-terminus); this interaction stabilizes the lumenal-open E2 conformation state and prevents the reverse reaction of the transport cycle.

The protein localises to the apical cell membrane. It catalyses the reaction K(+)(out) + ATP + H2O + H(+)(in) = K(+)(in) + ADP + phosphate + 2 H(+)(out). The catalytic subunit of the gastric H(+)/K(+) ATPase pump which transports H(+) ions in exchange for K(+) ions across the apical membrane of parietal cells. Uses ATP as an energy source to pump H(+) ions to the gastric lumen while transporting K(+) ion from the lumen into the cell. Remarkably generates a million-fold proton gradient across the gastric parietal cell membrane, acidifying the gastric juice down to pH 1. Within a transport cycle, the transfer of a H(+) ion across the membrane is coupled to ATP hydrolysis and is associated with a transient phosphorylation that shifts the pump conformation from inward-facing (E1) to outward-facing state (E2). The release of the H(+) ion in the stomach lumen is followed by binding of K(+) ion converting the pump conformation back to the E1 state. The polypeptide is Potassium-transporting ATPase alpha chain 1 (ATP4A) (Canis lupus familiaris (Dog)).